Reading from the N-terminus, the 506-residue chain is Maturase K (506 aa).

It belongs to the intron maturase 2 family. MatK subfamily.

The protein localises to the plastid. The protein resides in the chloroplast. In terms of biological role, usually encoded in the trnK tRNA gene intron. Probably assists in splicing its own and other chloroplast group II introns. The protein is Maturase K of Carica papaya (Papaya).